Reading from the N-terminus, the 273-residue chain is Undecaprenyl-diphosphatase (273 aa).

7 consecutive transmembrane segments (helical) span residues 39–59, 86–106, 117–137, 146–166, 189–209, 220–240, and 249–269; these read SGLTFDVALHLGTFLALVVYF, LPFLVIASAVPAALVGKLFET, LLIGLFLILFGVGLGLADLFG, VTVSHALVIGLFQCLALIPGV, FSFLMSLPIVAGAALFKMLHL, LPLAAGIVSSAVTGYISVAFL, and IAPFVWYRLIAGGAVVSVILT.

It belongs to the UppP family.

It localises to the cell inner membrane. The enzyme catalyses di-trans,octa-cis-undecaprenyl diphosphate + H2O = di-trans,octa-cis-undecaprenyl phosphate + phosphate + H(+). Functionally, catalyzes the dephosphorylation of undecaprenyl diphosphate (UPP). Confers resistance to bacitracin. In Pelobacter propionicus (strain DSM 2379 / NBRC 103807 / OttBd1), this protein is Undecaprenyl-diphosphatase.